A 270-amino-acid polypeptide reads, in one-letter code: Formamidopyrimidine-DNA glycosylase (270 aa).

Residue Pro2 is the Schiff-base intermediate with DNA of the active site. Glu3 functions as the Proton donor in the catalytic mechanism. Lys58 acts as the Proton donor; for beta-elimination activity in catalysis. DNA-binding residues include His90, Arg109, and Arg152. The segment at 237 to 270 adopts an FPG-type zinc-finger fold; sequence RVYGREGEPCHCGTVIRRRVDGGRSTFYCPKCQK. Residue Arg260 is the Proton donor; for delta-elimination activity of the active site.

The protein belongs to the FPG family. Monomer. Requires Zn(2+) as cofactor.

The enzyme catalyses Hydrolysis of DNA containing ring-opened 7-methylguanine residues, releasing 2,6-diamino-4-hydroxy-5-(N-methyl)formamidopyrimidine.. The catalysed reaction is 2'-deoxyribonucleotide-(2'-deoxyribose 5'-phosphate)-2'-deoxyribonucleotide-DNA = a 3'-end 2'-deoxyribonucleotide-(2,3-dehydro-2,3-deoxyribose 5'-phosphate)-DNA + a 5'-end 5'-phospho-2'-deoxyribonucleoside-DNA + H(+). Functionally, involved in base excision repair of DNA damaged by oxidation or by mutagenic agents. Acts as a DNA glycosylase that recognizes and removes damaged bases. Has a preference for oxidized purines, such as 7,8-dihydro-8-oxoguanine (8-oxoG). Has AP (apurinic/apyrimidinic) lyase activity and introduces nicks in the DNA strand. Cleaves the DNA backbone by beta-delta elimination to generate a single-strand break at the site of the removed base with both 3'- and 5'-phosphates. The protein is Formamidopyrimidine-DNA glycosylase of Rhizorhabdus wittichii (strain DSM 6014 / CCUG 31198 / JCM 15750 / NBRC 105917 / EY 4224 / RW1) (Sphingomonas wittichii).